A 204-amino-acid chain; its full sequence is Tumor protein D53 (204 aa).

Positions 1 to 31 (MEAQAQGLLETEPLQGRDGDAVGSADFSSML) are disordered. Residues 22-73 (VGSADFSSMLSEEEKEELKAELIQLEDEITTLRQVLSAKERHLVEIKQKLGM) are a coiled coil. S29, S86, S122, and S131 each carry phosphoserine. Position 133 is an omega-N-methylarginine (R133). A Phosphothreonine modification is found at T146. S149 and S174 each carry phosphoserine. Positions 164–204 (KVGGTNHGGGSFEEVLNSTAHASSQNASAGSRQTKDEELQC) are disordered. A compositionally biased stretch (polar residues) spans 179 to 195 (LNSTAHASSQNASAGSR).

The protein belongs to the TPD52 family. Forms a homodimer or heterodimer with other members of the family.

In Mus musculus (Mouse), this protein is Tumor protein D53 (Tpd52l1).